We begin with the raw amino-acid sequence, 505 residues long: Sodium/sialic acid symporter NanT (505 aa).

The next 5 helical transmembrane spans lie at Leu-9–Ala-29, Ile-45–Met-65, Ile-80–Phe-100, Phe-128–Met-148, and Pro-155–Ile-175. Ala-56 serves as a coordination point for Na(+). Thr-58 serves as a coordination point for N-acetyl-alpha-neuraminate. Leu-59 serves as a coordination point for Na(+). Residues Ser-60, Thr-63, Gln-82, and Arg-135 each coordinate N-acetyl-alpha-neuraminate. Asp-182 is a Na(+) binding site. 4 helical membrane-spanning segments follow: residues Val-183–Asn-203, Phe-227–Ser-247, Leu-280–Thr-300, and Phe-318–Ala-338. The Na(+) site is built by Ala-339, Ser-342, Ser-343, Ser-345, and Ser-346. The next 4 membrane-spanning stretches (helical) occupy residues Thr-378–Asn-398, Phe-406–Phe-426, Ala-435–Leu-455, and Phe-457–Pro-477.

The protein belongs to the sodium:solute symporter (SSF) (TC 2.A.21) family.

It localises to the cell inner membrane. The catalysed reaction is N-acetyl-alpha-neuraminate(out) + 2 Na(+)(out) = N-acetyl-alpha-neuraminate(in) + 2 Na(+)(in). Symporter that uses the Na(+) gradient as the driving force for the uptake of the sialic acid N-acetylneuraminic acid (Neu5Ac). Might play a role in persistence after colonization. The protein is Sodium/sialic acid symporter NanT of Aliivibrio fischeri (strain ATCC 700601 / ES114) (Vibrio fischeri).